Here is a 428-residue protein sequence, read N- to C-terminus: 3-phosphoshikimate 1-carboxyvinyltransferase (428 aa).

Positions 22, 23, and 27 each coordinate 3-phosphoshikimate. Phosphoenolpyruvate is bound at residue Lys-22. 2 residues coordinate phosphoenolpyruvate: Gly-96 and Arg-124. 3-phosphoshikimate is bound by residues Ser-170, Ser-171, Gln-172, Ser-198, Asp-314, Asn-337, and Lys-341. Phosphoenolpyruvate is bound at residue Gln-172. The active-site Proton acceptor is Asp-314. Phosphoenolpyruvate-binding residues include Arg-345, Arg-387, and Lys-412.

Belongs to the EPSP synthase family. Monomer.

It is found in the cytoplasm. It carries out the reaction 3-phosphoshikimate + phosphoenolpyruvate = 5-O-(1-carboxyvinyl)-3-phosphoshikimate + phosphate. It functions in the pathway metabolic intermediate biosynthesis; chorismate biosynthesis; chorismate from D-erythrose 4-phosphate and phosphoenolpyruvate: step 6/7. Its function is as follows. Catalyzes the transfer of the enolpyruvyl moiety of phosphoenolpyruvate (PEP) to the 5-hydroxyl of shikimate-3-phosphate (S3P) to produce enolpyruvyl shikimate-3-phosphate and inorganic phosphate. The protein is 3-phosphoshikimate 1-carboxyvinyltransferase of Photobacterium profundum (strain SS9).